A 355-amino-acid chain; its full sequence is Countin-like protein (355 aa).

The signal sequence occupies residues 1 to 27; sequence MNKSLFSLILLIITIFNLASNINIVSA. The tract at residues 63–83 is disordered; that stretch reads NNHEDNNNNNNNNNNNNNAYN. The span at 69 to 83 shows a compositional bias: low complexity; that stretch reads NNNNNNNNNNNNAYN. Residues 93–177 enclose the Saposin B-type domain; the sequence is GDIECVVCLD…ELITACSTPK (85 aa). Intrachain disulfides connect Cys97/Cys173, Cys100/Cys167, and Cys128/Cys140. N-linked (GlcNAc...) asparagine glycans are attached at residues Asn132, Asn209, Asn242, Asn253, Asn254, Asn282, and Asn303. The interval 290–355 is disordered; sequence ISNPTPTPTP…SSHYKNKINK (66 aa). Low complexity predominate over residues 301–342; it reads PSNSTTPTPTPTNSTPTPTSTSTPTSTPTSTPTPTPTSSSST. Over residues 345–355 the composition is skewed to basic residues; that stretch reads HSSHYKNKINK.

Belongs to the countin family.

It is found in the secreted. The protein is Countin-like protein of Dictyostelium discoideum (Social amoeba).